Here is a 246-residue protein sequence, read N- to C-terminus: Biosynthetic peptidoglycan transglycosylase (246 aa).

A helical transmembrane segment spans residues Phe28–Pro48.

Belongs to the glycosyltransferase 51 family.

The protein resides in the cell inner membrane. The enzyme catalyses [GlcNAc-(1-&gt;4)-Mur2Ac(oyl-L-Ala-gamma-D-Glu-L-Lys-D-Ala-D-Ala)](n)-di-trans,octa-cis-undecaprenyl diphosphate + beta-D-GlcNAc-(1-&gt;4)-Mur2Ac(oyl-L-Ala-gamma-D-Glu-L-Lys-D-Ala-D-Ala)-di-trans,octa-cis-undecaprenyl diphosphate = [GlcNAc-(1-&gt;4)-Mur2Ac(oyl-L-Ala-gamma-D-Glu-L-Lys-D-Ala-D-Ala)](n+1)-di-trans,octa-cis-undecaprenyl diphosphate + di-trans,octa-cis-undecaprenyl diphosphate + H(+). It functions in the pathway cell wall biogenesis; peptidoglycan biosynthesis. In terms of biological role, peptidoglycan polymerase that catalyzes glycan chain elongation from lipid-linked precursors. In Pasteurella multocida (strain Pm70), this protein is Biosynthetic peptidoglycan transglycosylase.